The sequence spans 140 residues: ATP synthase epsilon chain (140 aa).

The protein belongs to the ATPase epsilon chain family. In terms of assembly, F-type ATPases have 2 components, CF(1) - the catalytic core - and CF(0) - the membrane proton channel. CF(1) has five subunits: alpha(3), beta(3), gamma(1), delta(1), epsilon(1). CF(0) has three main subunits: a, b and c.

The protein resides in the cell inner membrane. Produces ATP from ADP in the presence of a proton gradient across the membrane. This chain is ATP synthase epsilon chain, found in Bdellovibrio bacteriovorus (strain ATCC 15356 / DSM 50701 / NCIMB 9529 / HD100).